We begin with the raw amino-acid sequence, 57 residues long: UPF0391 membrane protein RHECIAT_CH0003936 (57 aa).

Helical transmembrane passes span 4 to 24 (WALI…SGVS) and 33 to 53 (VLFG…LMAG).

It belongs to the UPF0391 family.

Its subcellular location is the cell membrane. This is UPF0391 membrane protein RHECIAT_CH0003936 from Rhizobium etli (strain CIAT 652).